The chain runs to 233 residues: MTIEQNLAQIQQNIQHAVQQAKRPESAVKLLAVSKTKPVEDIYQAYQAGQTAFGENYVQEGVEKIQYFAQKNIPLEWHFIGPLQSNKTKLVAEHFDWMQTLDRKKIADRLNEQRPHYKKPLNVLIQINISDEDSKSGIQPNEMLDLAKQIQNLPHLCLRGLMAIPAPTDDLATQEQAFTQMHSLFEQLKQALPDAQIDTLSMGMTDDMASAIQCGSTMVRIGTAIFGARDYSK.

Lys35 bears the N6-(pyridoxal phosphate)lysine mark.

This sequence belongs to the pyridoxal phosphate-binding protein YggS/PROSC family.

In terms of biological role, pyridoxal 5'-phosphate (PLP)-binding protein, which is involved in PLP homeostasis. This chain is Pyridoxal phosphate homeostasis protein, found in Pasteurella multocida (strain Pm70).